A 619-amino-acid polypeptide reads, in one-letter code: E3 ubiquitin-protein ligase DTX4 (619 aa).

WWE domains are found at residues 1–78 and 79–155; these read MLLA…PVRR and NYYD…RVRR. Disordered regions lie at residues 238-281 and 358-389; these read KPLD…PGPN and PPPVSKSEIKSIPGVSNTSRKTTKKQAKKGKT. Residues 261–273 show a composition bias toward polar residues; sequence QASSMPTGTTMGS. Basic residues predominate over residues 378–387; that stretch reads KTTKKQAKKG. Residues 409–468 form an RING-type; atypical zinc finger; sequence CTICMERLTAPSGYKGPQPTVKPDLVGKLSRCGHVYHIYCLVAMYNNGNKDGSLQCPTCK.

Belongs to the Deltex family. Interacts with NLRP4.

The protein localises to the cytoplasm. The catalysed reaction is S-ubiquitinyl-[E2 ubiquitin-conjugating enzyme]-L-cysteine + [acceptor protein]-L-lysine = [E2 ubiquitin-conjugating enzyme]-L-cysteine + N(6)-ubiquitinyl-[acceptor protein]-L-lysine.. It functions in the pathway protein modification; protein ubiquitination. In terms of biological role, regulator of Notch signaling, a signaling pathway involved in cell-cell communications that regulates a broad spectrum of cell-fate determinations. Functions as a ubiquitin ligase protein in vivo, mediating 'Lys48'-linked polyubiquitination and promoting degradation of TBK1, targeting to TBK1 requires interaction with NLRP4. This chain is E3 ubiquitin-protein ligase DTX4 (DTX4), found in Homo sapiens (Human).